The sequence spans 647 residues: MARAGPRLVLSEEAVRAKSGLGPHRDLAELQSLSIPGTYQEKITHLGHSLMSLTGLKSLDLSRNSLVSLEGIQYLTALESLNLYYNCISSLAEVFRLHALTELVDVDFRLNPVVKVEPDYRLFVVHLLPKLQQLDDRPVRASERKASRLHFASEDSLDSKESVPASLKEGRPHHPRAKCTEALAKQSLVMDADDEAVLNLIAECEWDLGRPPGSTSFSQKGREADSRGSQESRHLLSPQLVQYQCGDSGKQGRETRRSSCRGCCLEKMPWSQLCGELPPLYGAEPEASRAPRPHTYFTPHPDSMDTEDSASSQKLDLSGEMVPGPLPAPGKCRKRRMPVGRFQTFSDQEGLGCPERTHGSSVPKESLSRQDSSESRNGRTLSQPEASETEEQRSRGVTDTREPSPGSHSALPGKKTALQAALLETLLDLVDRSWGGCRSLHSNEAFLAQARHILSSVEEFTAAQDSSAMVGEDVGSLALESKSLQSRLAEQQQQHAREMSEVTAELHHTHKELDDLRQHLDKSLEENSRLKSLLLSMKKEVKSADTAATLNLQIAGLQTSVKRLCGEIVELKQHLEHYDKIQELTQMLQESHSSLVSTNEHLLQELSQVRAQHRAEVEQMHWSYQELKKTMALFPHSSASHGGCQAC.

LRR repeat units lie at residues 29–50 (ELQS…GHSL), 55–76 (GLKS…QYLT), and 77–98 (ALES…FRLH). The 40-residue stretch at 111–150 (NPVVKVEPDYRLFVVHLLPKLQQLDDRPVRASERKASRLH) folds into the LRRCT domain. 2 stretches are compositionally biased toward basic and acidic residues: residues 152–161 (ASEDSLDSKE) and 220–234 (KGRE…ESRH). Disordered stretches follow at residues 152 to 176 (ASED…HHPR), 211 to 256 (PPGS…RETR), and 285 to 413 (PEAS…ALPG). Position 237 is a phosphoserine (S237). Basic and acidic residues predominate over residues 366-377 (SLSRQDSSESRN). A Phosphoserine modification is found at S382. Residues 390-402 (EEQRSRGVTDTRE) show a composition bias toward basic and acidic residues. S404 carries the post-translational modification Phosphoserine. Residues 476 to 620 (SLALESKSLQ…AQHRAEVEQM (145 aa)) are a coiled coil.

The protein belongs to the CEP72 family. Interacts with KIZ, PCM1 and CDK5RAP2.

Its subcellular location is the cytoplasm. It is found in the cytoskeleton. The protein resides in the microtubule organizing center. It localises to the centrosome. The protein localises to the centriolar satellite. In terms of biological role, involved in the recruitment of key centrosomal proteins to the centrosome. Provides centrosomal microtubule-nucleation activity on the gamma-tubulin ring complexes (gamma-TuRCs) and has critical roles in forming a focused bipolar spindle, which is needed for proper tension generation between sister chromatids. Required for localization of KIZ, AKAP9 and gamma-tubulin ring complexes (gamma-TuRCs). Involved in centriole duplication. Required for CDK5RAP22, CEP152, WDR62 and CEP63 centrosomal localization and promotes the centrosomal localization of CDK2. This is Centrosomal protein of 72 kDa (CEP72) from Homo sapiens (Human).